We begin with the raw amino-acid sequence, 397 residues long: S-adenosylmethionine synthase (397 aa).

Histidine 17 lines the ATP pocket. A Mg(2+)-binding site is contributed by aspartate 19. Residue glutamate 45 participates in K(+) binding. L-methionine is bound by residues glutamate 58 and glutamine 101. Positions 101–111 are flexible loop; it reads QSPDIAQGVDK. ATP is bound by residues 176–178, 243–244, aspartate 252, 258–259, and lysine 279; these read DGK, RF, and RK. Position 252 (aspartate 252) interacts with L-methionine. Position 283 (lysine 283) interacts with L-methionine.

This sequence belongs to the AdoMet synthase family. Homotetramer; dimer of dimers. Mg(2+) is required as a cofactor. It depends on K(+) as a cofactor.

It localises to the cytoplasm. It catalyses the reaction L-methionine + ATP + H2O = S-adenosyl-L-methionine + phosphate + diphosphate. It functions in the pathway amino-acid biosynthesis; S-adenosyl-L-methionine biosynthesis; S-adenosyl-L-methionine from L-methionine: step 1/1. In terms of biological role, catalyzes the formation of S-adenosylmethionine (AdoMet) from methionine and ATP. The overall synthetic reaction is composed of two sequential steps, AdoMet formation and the subsequent tripolyphosphate hydrolysis which occurs prior to release of AdoMet from the enzyme. This is S-adenosylmethionine synthase from Staphylococcus aureus.